Consider the following 295-residue polypeptide: Ubiquinol-cytochrome c reductase complex assembly factor 1 (295 aa).

It belongs to the CBP3 family. As to quaternary structure, interacts with UQCC2. Interacts with UQCC3. Forms a complex, named COMB/coordinator of mitochondrial CYTB biogenesis, composed of UQCC1, UQCC2, UQCC4, UQCC5 and UQCC6; stabilizes nascent cytochrome b/MT-CYB and promotes its membrane insertion. Forms a complex, named COMA, composed of UQCC1, UQCC2 and UQCC4; activates MT-CYB translation. Forms a complex, named COMC, composed of UQCC1, UQCC2; UQCC3 and UQCC4; mediates MT-CYB hemylation and association with the first nuclear-encoded CIII subunit UQCRQ. In the brain it is restricted to the olfactory bulb, the hippocampus, the piriform cortex and the Purkinje cells.

It localises to the mitochondrion inner membrane. Its subcellular location is the cytoplasmic vesicle. Required for the assembly of the ubiquinol-cytochrome c reductase complex (mitochondrial respiratory chain complex III or cytochrome b-c1 complex). Involved in cytochrome b translation and/or stability. In Mus musculus (Mouse), this protein is Ubiquinol-cytochrome c reductase complex assembly factor 1 (Uqcc1).